The sequence spans 444 residues: Na(+)-translocating NADH-quinone reductase subunit A (444 aa).

Belongs to the NqrA family. In terms of assembly, composed of six subunits; NqrA, NqrB, NqrC, NqrD, NqrE and NqrF.

It carries out the reaction a ubiquinone + n Na(+)(in) + NADH + H(+) = a ubiquinol + n Na(+)(out) + NAD(+). NQR complex catalyzes the reduction of ubiquinone-1 to ubiquinol by two successive reactions, coupled with the transport of Na(+) ions from the cytoplasm to the periplasm. NqrA to NqrE are probably involved in the second step, the conversion of ubisemiquinone to ubiquinol. This chain is Na(+)-translocating NADH-quinone reductase subunit A, found in Shewanella frigidimarina (strain NCIMB 400).